A 411-amino-acid polypeptide reads, in one-letter code: Arginine deiminase (411 aa).

The Amidino-cysteine intermediate role is filled by C401.

This sequence belongs to the arginine deiminase family. Post-translationally, glycosylated.

It localises to the cytoplasm. The enzyme catalyses L-arginine + H2O = L-citrulline + NH4(+). It participates in amino-acid degradation; L-arginine degradation via ADI pathway; carbamoyl phosphate from L-arginine: step 1/2. This Streptococcus pyogenes serotype M1 protein is Arginine deiminase (arcA).